The chain runs to 121 residues: Small ribosomal subunit protein uS13 (121 aa).

Residues glycine 95–serine 121 are disordered.

The protein belongs to the universal ribosomal protein uS13 family. Part of the 30S ribosomal subunit. Forms a loose heterodimer with protein S19. Forms two bridges to the 50S subunit in the 70S ribosome.

Located at the top of the head of the 30S subunit, it contacts several helices of the 16S rRNA. In the 70S ribosome it contacts the 23S rRNA (bridge B1a) and protein L5 of the 50S subunit (bridge B1b), connecting the 2 subunits; these bridges are implicated in subunit movement. Contacts the tRNAs in the A and P-sites. The polypeptide is Small ribosomal subunit protein uS13 (Campylobacter jejuni subsp. jejuni serotype O:23/36 (strain 81-176)).